Consider the following 256-residue polypeptide: Small ribosomal subunit protein eS1B (256 aa).

An N-acetylalanine; partial modification is found at A2.

Belongs to the eukaryotic ribosomal protein eS1 family. Component of the small ribosomal subunit. Mature ribosomes consist of a small (40S) and a large (60S) subunit. The 40S subunit contains about 33 different proteins and 1 molecule of RNA (18S). The 60S subunit contains about 49 different proteins and 3 molecules of RNA (25S, 5.8S and 5S).

The protein localises to the cytoplasm. This chain is Small ribosomal subunit protein eS1B, found in Scheffersomyces stipitis (strain ATCC 58785 / CBS 6054 / NBRC 10063 / NRRL Y-11545) (Yeast).